A 635-amino-acid chain; its full sequence is Cationic amino acid transporter 4 (635 aa).

Helical transmembrane passes span 42-62 (LTLL…TGTV), 66-86 (MAGP…LLAA), and 113-133 (IWAF…GAAV). N-linked (GlcNAc...) asparagine glycosylation is found at Asn-146, Asn-151, and Asn-195. The chain crosses the membrane as a helical span at residues 197-217 (TFSAISLIVILFIIVLGFILA). A glycan (N-linked (GlcNAc...) asparagine) is linked at Asn-221. Helical transmembrane passes span 229–249 (FAPF…YAFV), 270–290 (MAIA…STVL), 318–338 (GFIV…SNLF), 365–385 (QVPV…ALLL), and 391–411 (VQFL…SIIV). Ser-422 and Ser-427 each carry phosphoserine. The next 4 helical transmembrane spans lie at 478–498 (VAWA…VLVF), 508–528 (WGYV…LLVL), 539–559 (TFQI…NTCL), and 567–587 (TWLR…GYGI).

It belongs to the amino acid-polyamine-organocation (APC) superfamily. Cationic amino acid transporter (CAT) (TC 2.A.3.3) family.

The protein resides in the membrane. Its function is as follows. Involved in the transport of the cationic amino acids (arginine, lysine and ornithine). The polypeptide is Cationic amino acid transporter 4 (Slc7a4) (Mus musculus (Mouse)).